A 587-amino-acid polypeptide reads, in one-letter code: Bifunctional dihydrofolate reductase-thymidylate synthase (587 aa).

The 229-residue stretch at 9 to 237 (DIYAICACCK…TTLDFIIYSK (229 aa)) folds into the DHFR domain. Residue 36-42 (GIGNAGV) coordinates NADP(+). Position 51 (aspartate 51) interacts with substrate. Residues 108 to 110 (KKS) and 129 to 132 (LSRT) each bind NADP(+). 3 residues coordinate substrate: isoleucine 173, tyrosine 179, and threonine 194. 174-181 (GGSSVYKE) serves as a coordination point for NADP(+). Positions 301-587 (NHPEYQYLNI…HDKINMDMAA (287 aa)) are thymidylate synthase. Arginine 324 serves as a coordination point for dUMP. Residue cysteine 469 is part of the active site. DUMP is bound by residues histidine 470, 488–492 (QRSCD), asparagine 500, and 530–532 (HVY).

The protein in the N-terminal section; belongs to the dihydrofolate reductase family. This sequence in the C-terminal section; belongs to the thymidylate synthase family. In terms of assembly, homodimer.

The catalysed reaction is (6S)-5,6,7,8-tetrahydrofolate + NADP(+) = 7,8-dihydrofolate + NADPH + H(+). It carries out the reaction dUMP + (6R)-5,10-methylene-5,6,7,8-tetrahydrofolate = 7,8-dihydrofolate + dTMP. It participates in cofactor biosynthesis; tetrahydrofolate biosynthesis; 5,6,7,8-tetrahydrofolate from 7,8-dihydrofolate: step 1/1. Functionally, bifunctional enzyme. Involved in de novo dTMP biosynthesis. Key enzyme in folate metabolism. Catalyzes an essential reaction for de novo glycine and purine synthesis, DNA precursor synthesis, and for the conversion of dUMP to dTMP. This is Bifunctional dihydrofolate reductase-thymidylate synthase from Plasmodium berghei (strain Anka).